We begin with the raw amino-acid sequence, 501 residues long: Growth/differentiation factor 5 (501 aa).

Residues 1 to 27 (MRLPKLLTFLLWYLAWLDLEFICTVLG) form the signal peptide. Residues 28-381 (APDLGQRPQG…YLFSQRRKRR (354 aa)) constitute a propeptide that is removed on maturation. Residues 29–169 (PDLGQRPQGT…EPFRPPPITP (141 aa)) are disordered. A compositionally biased stretch (pro residues) spans 99-111 (PRPGGPEPKPGHP). The segment covering 148–162 (KAREPGPPREPKEPF) has biased composition (basic and acidic residues). N-linked (GlcNAc...) asparagine glycosylation occurs at N189. Residues 246-265 (PSDTAKPAAPGGGRAAQLKL) form a disordered region. Disulfide bonds link C400/C466, C429/C498, and C433/C500.

This sequence belongs to the TGF-beta family. In terms of assembly, homodimer; disulfide-linked. Interacts with serine proteases, HTRA1 and HTRA3. Following LPS binding, may form a complex with CXCR4, HSP90AA1 and HSPA8. Interacts with high affinity with NOG; inhibits chondrogenesis. Interacts with high affinity with BMPR1B and lower affinity with BMPR1A; positively regulates chondrocyte differentiation and induces SMAD dependent signaling. Interacts with FBN1 (via N-terminal domain) and FBN2. Interacts with TGFBR3. Predominantly expressed in long bones during embryonic development. Expressed in monocytes (at protein level).

It localises to the secreted. It is found in the cell membrane. In terms of biological role, growth factor involved in bone and cartilage formation. During cartilage development regulates differentiation of chondrogenic tissue through two pathways. Firstly, positively regulates differentiation of chondrogenic tissue through its binding of high affinity with BMPR1B and of less affinity with BMPR1A, leading to induction of SMAD1-SMAD5-SMAD8 complex phosphorylation and then SMAD protein signaling transduction. Secondly, negatively regulates chondrogenic differentiation through its interaction with NOG. Required to prevent excessive muscle loss upon denervation. This function requires SMAD4 and is mediated by phosphorylated SMAD1/5/8. Binds bacterial lipopolysaccharide (LPS) and mediates LPS-induced inflammatory response, including TNF secretion by monocytes. This Homo sapiens (Human) protein is Growth/differentiation factor 5 (GDF5).